We begin with the raw amino-acid sequence, 311 residues long: Transcriptional regulatory protein MoaR1 (311 aa).

Positions 15 to 117 (LNATTAGAVQ…SEPPGYRLLI (103 aa)) form a DNA-binding region, ompR/PhoB-type.

The protein belongs to the AfsR/DnrI/RedD regulatory family.

In terms of biological role, acts as a positive transcriptional regulator of the molybdopterin biosynthesis moa1 locus, promoting the expression of the moaA1B1C1D1 genes. This is Transcriptional regulatory protein MoaR1 (moaR1) from Mycobacterium bovis (strain BCG / Pasteur 1173P2).